The following is a 173-amino-acid chain: Small ribosomal subunit protein uS5 (173 aa).

In terms of domain architecture, S5 DRBM spans 17–80 (WQERVIQIRR…ADGKKQLIDV (64 aa)).

It belongs to the universal ribosomal protein uS5 family. Part of the 30S ribosomal subunit. Contacts proteins S4 and S8.

Its function is as follows. With S4 and S12 plays an important role in translational accuracy. Functionally, located at the back of the 30S subunit body where it stabilizes the conformation of the head with respect to the body. The sequence is that of Small ribosomal subunit protein uS5 from Rippkaea orientalis (strain PCC 8801 / RF-1) (Cyanothece sp. (strain PCC 8801)).